The primary structure comprises 856 residues: Envelope glycoprotein gp150 (856 aa).

The Extracellular segment spans residues Met-1–Lys-785. 19 N-linked (GlcNAc...) asparagine; by host glycosylation sites follow: Asn-220, Asn-258, Asn-269, Asn-274, Asn-298, Asn-330, Asn-336, Asn-342, Asn-418, Asn-422, Asn-448, Asn-469, Asn-481, Asn-499, Asn-518, Asn-531, Asn-548, Asn-551, and Asn-556. A fusion peptide region spans residues Val-616–Ile-636. Residues His-643–Ala-693 are a coiled coil. The segment at Ile-662–Lys-680 is immunosuppression. 4 N-linked (GlcNAc...) asparagine; by host glycosylation sites follow: Asn-717, Asn-721, Asn-729, and Asn-737. The stretch at Tyr-736–Asp-772 forms a coiled coil. Residues Gly-786–Pro-806 traverse the membrane as a helical segment. At Thr-807 to Glu-856 the chain is on the cytoplasmic side.

The mature envelope protein (Env) consists of a trimer of SU-TM heterodimers attached by noncovalent interactions or by a labile interchain disulfide bond. Specific enzymatic cleavages in vivo yield mature proteins. Envelope glycoproteins are synthesized as an inactive precursor that is N-glycosylated and processed likely by host cell furin or by a furin-like protease in the Golgi to yield the mature SU and TM proteins. The cleavage site between SU and TM requires the minimal sequence [KR]-X-[KR]-R.

It localises to the virion membrane. Its subcellular location is the host cell membrane. Functionally, the surface protein (SU) attaches the virus to the host cell by binding to its receptor. This interaction triggers the refolding of the transmembrane protein (TM) and is thought to activate its fusogenic potential by unmasking its fusion peptide. Fusion occurs at the host cell plasma membrane. Its function is as follows. The transmembrane protein (TM) acts as a class I viral fusion protein. Under the current model, the protein has at least 3 conformational states: pre-fusion native state, pre-hairpin intermediate state, and post-fusion hairpin state. During viral and target cell membrane fusion, the coiled coil regions (heptad repeats) assume a trimer-of-hairpins structure, positioning the fusion peptide in close proximity to the C-terminal region of the ectodomain. The formation of this structure appears to drive apposition and subsequent fusion of viral and target cell membranes. Membranes fusion leads to delivery of the nucleocapsid into the cytoplasm. The sequence is that of Envelope glycoprotein gp150 (env) from Feline immunodeficiency virus (strain UT-113) (FIV).